A 170-amino-acid chain; its full sequence is Peptide deformylase 1 (170 aa).

Positions 92 and 135 each coordinate Fe cation. Residue glutamate 136 is part of the active site. Histidine 139 lines the Fe cation pocket.

The protein belongs to the polypeptide deformylase family. It depends on Fe(2+) as a cofactor.

The enzyme catalyses N-terminal N-formyl-L-methionyl-[peptide] + H2O = N-terminal L-methionyl-[peptide] + formate. Its function is as follows. Removes the formyl group from the N-terminal Met of newly synthesized proteins. Requires at least a dipeptide for an efficient rate of reaction. N-terminal L-methionine is a prerequisite for activity but the enzyme has broad specificity at other positions. The polypeptide is Peptide deformylase 1 (Coxiella burnetii (strain RSA 493 / Nine Mile phase I)).